A 724-amino-acid polypeptide reads, in one-letter code: Solute carrier organic anion transporter family member 4C1 (724 aa).

Residues 1-80 (MQGSKGVENP…PPGSQLSELE (80 aa)) are disordered. Over 1-101 (MQGSKGVENP…QCLQRCNNPK (101 aa)) the chain is Cytoplasmic. Phosphoserine is present on residues S15 and S16. T19 carries the post-translational modification Phosphothreonine. S24, S26, and S28 each carry phosphoserine. Over residues 25 to 46 (ASPSQVEVSAVASRNQNGGSQP) the composition is skewed to polar residues. A helical membrane pass occupies residues 102–122 (GFLLHYCLLALTQGIVVNGLV). Over 123–141 (NISISTIEKRYEMKSSLTG) the chain is Extracellular. Residues 142 to 162 (LISSSYDISFCVLSLFVSFFG) traverse the membrane as a helical segment. Over 163 to 168 (ERGHKP) the chain is Cytoplasmic. Residues 169-193 (RWLAFASFMIGLGALVFSLPHFFSG) form a helical membrane-spanning segment. Topologically, residues 194–218 (RYELGTIFEDTCLTRNSTRCASSTS) are extracellular. The helical transmembrane segment at 219-249 (LLSNYFYVFVLGQLLLGTGGTPLYTLGTAFI) threads the bilayer. At 250–269 (DDSVPTHKSSLYIGIGYSMS) the chain is on the cytoplasmic side. A helical transmembrane segment spans residues 270 to 290 (ILGPAIGYVLGGQLLTMYIDV). The Extracellular segment spans residues 291-306 (AMGQSSDLTEDDPRWL). The helical transmembrane segment at 307 to 331 (GAWWIGFLLAWLFAWSLIMPFSCFP) threads the bilayer. Over 332–376 (KHLPGTAKIQAGKTSQTHQNNSTSFQHMDENFGKSIKDFPTAVKN) the chain is Cytoplasmic. A helical membrane pass occupies residues 377–398 (LMRNTVFICLVLSTTSEALVTT). Over 399–418 (GFATFLPKFIENQFGLTSSF) the chain is Extracellular. A helical membrane pass occupies residues 419 to 442 (AATLGGAVLIPGAALGQILGGVLV). The Cytoplasmic portion of the chain corresponds to 443–446 (SKFK). Residues 447–470 (MKCKNTMKFALCTSGVALMLSFVF) traverse the membrane as a helical segment. The Extracellular segment spans residues 471-580 (IYAKCENGPF…KTQCSNLPIF (110 aa)). The Kazal-like domain occupies 494-549 (GNLTAPCNANCNCLRSYYYPLCGSDGVQYFSPCFAGCLNSVSNRKPKAYYNCSCIE). Cystine bridges form between C500–C530, C506–C526, and C515–C547. A helical membrane pass occupies residues 581-603 (LGIFFITVIFTFMAGTPITVSIL). The Cytoplasmic segment spans residues 604–612 (RCVNHRQRS). Residues 613–638 (LALGVQFMLLRLLGTIPGPIIFGVTI) traverse the membrane as a helical segment. Topologically, residues 639–672 (DSTCVLWDINECGTKGACWIYDNIRMAHMLVAIS) are extracellular. Residues 673–690 (VTCKVITIFFNGLAIVLY) traverse the membrane as a helical segment. At 691-724 (KPPPPGTEVSFQSQNVVVSTITVEEDLNKIENEG) the chain is on the cytoplasmic side.

This sequence belongs to the organo anion transporter (TC 2.A.60) family. As to expression, predominantly expressed in kidney and lung but also weakly expressed in brain. Localizes primarily in the proximal straight tubules, the S3 fraction of the nephron.

The protein localises to the basolateral cell membrane. Its subcellular location is the apical cell membrane. It carries out the reaction estrone 3-sulfate(out) = estrone 3-sulfate(in). It catalyses the reaction L-thyroxine(out) = L-thyroxine(in). The enzyme catalyses 3,3',5-triiodo-L-thyronine(out) = 3,3',5-triiodo-L-thyronine(in). The catalysed reaction is chenodeoxycholate(out) = chenodeoxycholate(in). It carries out the reaction glycocholate(out) = glycocholate(in). It catalyses the reaction L-homoarginine(in) = L-homoarginine(out). The enzyme catalyses L-arginine(in) = L-arginine(out). The catalysed reaction is N(omega),N(omega)-dimethyl-L-arginine(out) = N(omega),N(omega)-dimethyl-L-arginine(in). Its function is as follows. Mediates the transport of organic anions such as steroids (estrone 3-sulfate, chenodeoxycholate, glycocholate) and thyroid hormones (3,3',5-triiodo-L-thyronine (T3), L-thyroxine (T4)), in the kidney. Capable of transporting cAMP and pharmacological substances such as digoxin, ouabain and methotrexate. Transport is independent of sodium, chloride ion, and ATP. Transport activity is stimulated by an acidic extracellular environment due to increased substrate affinity to the transporter. The driving force for this transport activity is currently not known. The role of hydrogencarbonate (HCO3(-), bicarbonate) as the probable counteranion that exchanges for organic anions is still not well defined. Functions as an uptake transporter at the apical membrane, suggesting a role in renal reabsorption. Involved in the renal secretion of the uremic toxin ADMA (N(omega),N(omega)-dimethyl-L-arginine or asymmetrical dimethylarginine), which is associated to cardiovascular events and mortality, and the structurally related amino acids L-arginine and L-homoarginine (a cardioprotective biomarker). Can act bidirectionally, suggesting a dual protective role of this transport protein; exporting L-homoarginine after being synthesized in proximal tubule cells, and mediating uptake of ADMA from the blood into proximal tubule cells where it is degraded by the enzyme dimethylarginine dimethylaminohydrolase 1 (DDAH1). May be involved in sperm maturation by enabling directed movement of organic anions and compounds within or between cells. This ion-transporting process is important to maintain the strict epididymal homeostasis necessary for sperm maturation. May have a role in secretory functions since seminal vesicle epithelial cells are assumed to secrete proteins involved in decapacitation by modifying surface proteins to facilitate the acquisition of the ability to fertilize the egg. In Rattus norvegicus (Rat), this protein is Solute carrier organic anion transporter family member 4C1.